A 68-amino-acid polypeptide reads, in one-letter code: uncharacterized protein (68 aa).

It to bacterial proteins yidD.

This is an uncharacterized protein from Haemophilus influenzae (Bacteriophage HP1).